A 173-amino-acid polypeptide reads, in one-letter code: Dual-action ribosomal maturation protein DarP (173 aa).

It belongs to the DarP family.

It is found in the cytoplasm. In terms of biological role, member of a network of 50S ribosomal subunit biogenesis factors which assembles along the 30S-50S interface, preventing incorrect 23S rRNA structures from forming. Promotes peptidyl transferase center (PTC) maturation. The protein is Dual-action ribosomal maturation protein DarP of Pseudomonas fluorescens (strain ATCC BAA-477 / NRRL B-23932 / Pf-5).